We begin with the raw amino-acid sequence, 616 residues long: Chaperone protein HscA homolog (616 aa).

Belongs to the heat shock protein 70 family.

Functionally, chaperone involved in the maturation of iron-sulfur cluster-containing proteins. Has a low intrinsic ATPase activity which is markedly stimulated by HscB. The sequence is that of Chaperone protein HscA homolog from Histophilus somni (strain 2336) (Haemophilus somnus).